The chain runs to 174 residues: NADH-quinone oxidoreductase subunit I (174 aa).

4Fe-4S ferredoxin-type domains are found at residues 44–74 (LNRY…VEGD) and 90–119 (RVYQ…MTND). 8 residues coordinate [4Fe-4S] cluster: Cys54, Cys57, Cys60, Cys64, Cys99, Cys102, Cys105, and Cys109.

It belongs to the complex I 23 kDa subunit family. NDH-1 is composed of 14 different subunits. Subunits NuoA, H, J, K, L, M, N constitute the membrane sector of the complex. The cofactor is [4Fe-4S] cluster.

It is found in the cell membrane. It catalyses the reaction a quinone + NADH + 5 H(+)(in) = a quinol + NAD(+) + 4 H(+)(out). In terms of biological role, NDH-1 shuttles electrons from NADH, via FMN and iron-sulfur (Fe-S) centers, to quinones in the respiratory chain. The immediate electron acceptor for the enzyme in this species is believed to be menaquinone. Couples the redox reaction to proton translocation (for every two electrons transferred, four hydrogen ions are translocated across the cytoplasmic membrane), and thus conserves the redox energy in a proton gradient. This chain is NADH-quinone oxidoreductase subunit I, found in Mycobacterium sp. (strain KMS).